Reading from the N-terminus, the 189-residue chain is uncharacterized protein (189 aa).

The next 5 helical transmembrane spans lie at 4-21 (AIST…FLFR), 34-56 (AFYP…PLIL), 79-101 (LLVI…LIYS), 122-144 (RILS…VLLN), and 148-170 (ILHV…NLLV).

It is found in the cell membrane. This is an uncharacterized protein from Archaeoglobus fulgidus (strain ATCC 49558 / DSM 4304 / JCM 9628 / NBRC 100126 / VC-16).